The sequence spans 471 residues: Ankyrin repeat and death domain-containing protein 1A (471 aa).

10 ANK repeats span residues 19–48 (VGRV…AVDE), 52–81 (FGMN…KIHC), 85–114 (DGLT…DVAL), 120–149 (LGRT…DHSV), 153–182 (EGNT…DLEE), 186–215 (EGLT…TVNA), 219–248 (KNLS…CTNV), 251–280 (HGAS…DLNA), 284–313 (RQQT…DLNL), and 317–346 (QGKT…FYKW). The 89-residue stretch at 379-467 (SVLWRLASRH…DLAELAVASV (89 aa)) folds into the Death domain.

This is Ankyrin repeat and death domain-containing protein 1A (ANKDD1A) from Macaca fascicularis (Crab-eating macaque).